The sequence spans 238 residues: uncharacterized protein (238 aa).

A run of 4 helical transmembrane segments spans residues 13-33 (TLFFIYFVFLTSFCLCFFGII), 40-60 (GSVGQLIAKLVVIVVLTLILG), 107-127 (VVLILSLVLTYYLSIYAFCQV), and 140-160 (VISLIILIFFLSLSFFVPMAF). 4Fe-4S ferredoxin-type domains lie at 178 to 208 (PFFQLKTNNNCVKCKLCEFKCPMQIKITEKL) and 204 to 233 (ITEKLDQKECIRCFECKSSCKKDALSFSYA). Cys-188, Cys-191, Cys-194, Cys-198, Cys-213, Cys-216, Cys-219, and Cys-223 together coordinate [4Fe-4S] cluster.

The protein resides in the cell membrane. This is an uncharacterized protein from Methanocaldococcus jannaschii (strain ATCC 43067 / DSM 2661 / JAL-1 / JCM 10045 / NBRC 100440) (Methanococcus jannaschii).